Reading from the N-terminus, the 224-residue chain is MQVLASLFGRSPFSPLQAHVELVSASIEVLFPLFSAIKEGDYQRVEALAQLVSSKERQADGVKNDIRSHLASGVFIPVSRLAMLEIISTQDSVADCAEDIAILLTVKELRFYPEFEEIFFQFLQKTVQSFEVVAKAIREMDLLLESSFGGCRAEKTRVLVNEVSNLEHECDLLQRELMKILFSENFSIETKDFVLWTQIIKRLSGISNNSEKLAYRVGMTLEEK.

The protein belongs to the UPF0111 family.

This is UPF0111 protein TC_0063 from Chlamydia muridarum (strain MoPn / Nigg).